We begin with the raw amino-acid sequence, 440 residues long: Thymidine phosphorylase (440 aa).

The protein belongs to the thymidine/pyrimidine-nucleoside phosphorylase family. Homodimer.

The enzyme catalyses thymidine + phosphate = 2-deoxy-alpha-D-ribose 1-phosphate + thymine. The protein operates within pyrimidine metabolism; dTMP biosynthesis via salvage pathway; dTMP from thymine: step 1/2. The enzymes which catalyze the reversible phosphorolysis of pyrimidine nucleosides are involved in the degradation of these compounds and in their utilization as carbon and energy sources, or in the rescue of pyrimidine bases for nucleotide synthesis. This Shigella flexneri serotype 5b (strain 8401) protein is Thymidine phosphorylase.